Reading from the N-terminus, the 157-residue chain is Phosphopantetheine adenylyltransferase (157 aa).

Position 9 (serine 9) interacts with substrate. ATP-binding positions include 9–10 (SF) and histidine 17. Substrate is bound by residues lysine 41, leucine 73, and lysine 87. ATP is bound by residues 88 to 90 (GLR), glutamate 98, and 123 to 129 (YSYLSSS).

It belongs to the bacterial CoaD family. Homohexamer. Mg(2+) is required as a cofactor.

Its subcellular location is the cytoplasm. The enzyme catalyses (R)-4'-phosphopantetheine + ATP + H(+) = 3'-dephospho-CoA + diphosphate. The protein operates within cofactor biosynthesis; coenzyme A biosynthesis; CoA from (R)-pantothenate: step 4/5. In terms of biological role, reversibly transfers an adenylyl group from ATP to 4'-phosphopantetheine, yielding dephospho-CoA (dPCoA) and pyrophosphate. This Alkaliphilus metalliredigens (strain QYMF) protein is Phosphopantetheine adenylyltransferase.